We begin with the raw amino-acid sequence, 1486 residues long: Chromosome partition protein MukB (1486 aa).

34 to 41 (GGNGAGKS) contributes to the ATP binding site. Coiled-coil stretches lie at residues 326–418 (LEAD…QYNQ), 444–480 (LETF…QAYQ), and 509–603 (RHLA…RAPV). The segment at 666 to 783 (PGGSEDQRLN…EVPLFGRAAR (118 aa)) is flexible hinge. 3 coiled-coil regions span residues 835 to 923 (EAEI…AKLE), 977 to 1115 (EMLS…TAKA), and 1209 to 1266 (VEAI…QNVS).

It belongs to the SMC family. MukB subfamily. Homodimerization via its hinge domain. Binds to DNA via its C-terminal region. Interacts, and probably forms a ternary complex, with MukE and MukF via its C-terminal region. The complex formation is stimulated by calcium or magnesium. Interacts with tubulin-related protein FtsZ.

It is found in the cytoplasm. The protein localises to the nucleoid. In terms of biological role, plays a central role in chromosome condensation, segregation and cell cycle progression. Functions as a homodimer, which is essential for chromosome partition. Involved in negative DNA supercoiling in vivo, and by this means organize and compact chromosomes. May achieve or facilitate chromosome segregation by condensation DNA from both sides of a centrally located replisome during cell division. The sequence is that of Chromosome partition protein MukB from Escherichia coli O1:K1 / APEC.